A 96-amino-acid polypeptide reads, in one-letter code: MTGKEAIIHYLGTHNSFCAPDVAALTGATVTSINQAAAKMARAGLLVIEGKVWRTVYYRFATREEREGKMSTNLVFKECRQSAAMKRVLAVYGVKR.

The polypeptide is Protein ren (ren) (Escherichia coli (Bacteriophage lambda)).